The sequence spans 485 residues: UDP-N-acetylmuramate--L-alanine ligase (485 aa).

129 to 135 (GTHGKTT) lines the ATP pocket.

The protein belongs to the MurCDEF family.

Its subcellular location is the cytoplasm. It catalyses the reaction UDP-N-acetyl-alpha-D-muramate + L-alanine + ATP = UDP-N-acetyl-alpha-D-muramoyl-L-alanine + ADP + phosphate + H(+). The protein operates within cell wall biogenesis; peptidoglycan biosynthesis. Its function is as follows. Cell wall formation. The sequence is that of UDP-N-acetylmuramate--L-alanine ligase from Vibrio campbellii (strain ATCC BAA-1116).